Here is a 133-residue protein sequence, read N- to C-terminus: uncharacterized protein (133 aa).

This is an uncharacterized protein from Saccharomyces cerevisiae (strain ATCC 204508 / S288c) (Baker's yeast).